Reading from the N-terminus, the 49-residue chain is Large ribosomal subunit protein bL33B (49 aa).

This sequence belongs to the bacterial ribosomal protein bL33 family.

The chain is Large ribosomal subunit protein bL33B from Limosilactobacillus reuteri subsp. reuteri (strain JCM 1112) (Lactobacillus reuteri).